Here is a 136-residue protein sequence, read N- to C-terminus: DNA-directed RNA polymerase subunit omega (136 aa).

Positions E81–D136 are disordered. Positions E83 to P99 are enriched in low complexity. Residues Q109–R120 show a composition bias toward basic and acidic residues.

This sequence belongs to the RNA polymerase subunit omega family. As to quaternary structure, the RNAP catalytic core consists of 2 alpha, 1 beta, 1 beta' and 1 omega subunit. When a sigma factor is associated with the core the holoenzyme is formed, which can initiate transcription.

The catalysed reaction is RNA(n) + a ribonucleoside 5'-triphosphate = RNA(n+1) + diphosphate. Promotes RNA polymerase assembly. Latches the N- and C-terminal regions of the beta' subunit thereby facilitating its interaction with the beta and alpha subunits. The chain is DNA-directed RNA polymerase subunit omega from Methylobacterium nodulans (strain LMG 21967 / CNCM I-2342 / ORS 2060).